A 69-amino-acid chain; its full sequence is Large ribosomal subunit protein bL32c (69 aa).

Belongs to the bacterial ribosomal protein bL32 family.

The protein localises to the plastid. It localises to the chloroplast. The chain is Large ribosomal subunit protein bL32c (rpl32) from Anthoceros angustus (Hornwort).